Here is a 133-residue protein sequence, read N- to C-terminus: Peptide methionine sulfoxide reductase MsrB (133 aa).

The 123-residue stretch at 8–130 folds into the MsrB domain; sequence LDVWRELLSD…NSASLRLKPR (123 aa). Positions 47, 50, 96, and 99 each coordinate Zn(2+). Cysteine 119 acts as the Nucleophile in catalysis.

It belongs to the MsrB Met sulfoxide reductase family. Zn(2+) is required as a cofactor.

It carries out the reaction L-methionyl-[protein] + [thioredoxin]-disulfide + H2O = L-methionyl-(R)-S-oxide-[protein] + [thioredoxin]-dithiol. In Azotobacter vinelandii (strain DJ / ATCC BAA-1303), this protein is Peptide methionine sulfoxide reductase MsrB.